Reading from the N-terminus, the 228-residue chain is Calcyclin-binding protein (228 aa).

Ala2 is modified (N-acetylalanine). The interval 2 to 80 (ASEELQKDLE…YTVKISNYGW (79 aa)) is interaction with SIAH1. A Phosphoserine modification is found at Ser3. Residues Lys8 and Lys19 each carry the N6-acetyllysine modification. Ser34 is modified (phosphoserine). The CS domain maps to 73-167 (VKISNYGWDQ…VENTRWDYLT (95 aa)). An interaction with SKP1 region spans residues 73–228 (VKISNYGWDQ…EKQAKGDTEF (156 aa)). Lys85 and Lys118 each carry N6-acetyllysine. Residues 154–228 (CRKKVENTRW…EKQAKGDTEF (75 aa)) are interaction with S100A6. The SGS domain maps to 168–228 (QVEKECKEKE…EKQAKGDTEF (61 aa)).

In terms of assembly, component of some large E3 complex at least composed of UBE2D1, SIAH1, CACYBP/SIP, SKP1, APC and TBL1X. Interacts directly with SIAH1, SIAH2 and SKP1. Interacts with protein of the S100 family S100A1, S100A6, S100B, S100P and S100A12 in a calcium-dependent manner. In terms of processing, phosphorylated on serine residues. Phosphorylated upon induction by RA or at high calcium concentrations.

It localises to the nucleus. The protein localises to the cytoplasm. Its function is as follows. May be involved in calcium-dependent ubiquitination and subsequent proteasomal degradation of target proteins. Probably serves as a molecular bridge in ubiquitin E3 complexes. Participates in the ubiquitin-mediated degradation of beta-catenin (CTNNB1). The sequence is that of Calcyclin-binding protein (CACYBP) from Macaca fascicularis (Crab-eating macaque).